The primary structure comprises 179 residues: Large ribosomal subunit protein uL6 (179 aa).

It belongs to the universal ribosomal protein uL6 family. In terms of assembly, part of the 50S ribosomal subunit.

In terms of biological role, this protein binds to the 23S rRNA, and is important in its secondary structure. It is located near the subunit interface in the base of the L7/L12 stalk, and near the tRNA binding site of the peptidyltransferase center. This is Large ribosomal subunit protein uL6 from Mycobacterium sp. (strain KMS).